The following is a 347-amino-acid chain: Guanine nucleotide-binding protein alpha-6 subunit (347 aa).

One can recognise a G-alpha domain in the interval 30 to 347 (GITQVLLLGA…IIVGHVMDLV (318 aa)). Residues 33-46 (QVLLLGAGESGKST) are G1 motif. Residues 38 to 45 (GAGESGKS), 172 to 178 (LRARVTT), 197 to 201 (DVGGQ), 266 to 269 (NKKD), and A322 each bind GTP. S45 and T178 together coordinate Mg(2+). The G2 motif stretch occupies residues 170–178 (DALRARVTT). Residues 193 to 202 (MKIIDVGGQR) are G3 motif. Residues 262 to 269 (ILFLNKKD) form a G4 motif region. Positions 320–325 (TIAVDT) are G5 motif.

This sequence belongs to the G-alpha family. As to quaternary structure, g proteins are composed of 3 units; alpha, beta and gamma. The alpha chain contains the guanine nucleotide binding site.

Its function is as follows. Guanine nucleotide-binding proteins (G proteins) are involved as modulators or transducers in various transmembrane signaling systems. G alpha-6 is involved in the folic acid chemotaxis signal transduction pathway. This chain is Guanine nucleotide-binding protein alpha-6 subunit (gpaF), found in Dictyostelium discoideum (Social amoeba).